Reading from the N-terminus, the 78-residue chain is UPF0291 protein Ldb1355 (78 aa).

Belongs to the UPF0291 family.

The protein resides in the cytoplasm. The protein is UPF0291 protein Ldb1355 of Lactobacillus delbrueckii subsp. bulgaricus (strain ATCC 11842 / DSM 20081 / BCRC 10696 / JCM 1002 / NBRC 13953 / NCIMB 11778 / NCTC 12712 / WDCM 00102 / Lb 14).